Here is a 20-residue protein sequence, read N- to C-terminus: 21 kDa cold shock-induced protein (20 aa).

Residues 1 to 12 (TDSIKETIKETV) are compositionally biased toward basic and acidic residues. A disordered region spans residues 1 to 20 (TDSIKETIKETVNHQAEWPY).

This Streptococcus thermophilus protein is 21 kDa cold shock-induced protein.